The chain runs to 255 residues: Tryptophan synthase alpha chain (255 aa).

Active-site proton acceptor residues include Glu42 and Asp53.

The protein belongs to the TrpA family. In terms of assembly, tetramer of two alpha and two beta chains.

It catalyses the reaction (1S,2R)-1-C-(indol-3-yl)glycerol 3-phosphate + L-serine = D-glyceraldehyde 3-phosphate + L-tryptophan + H2O. The protein operates within amino-acid biosynthesis; L-tryptophan biosynthesis; L-tryptophan from chorismate: step 5/5. Its function is as follows. The alpha subunit is responsible for the aldol cleavage of indoleglycerol phosphate to indole and glyceraldehyde 3-phosphate. The protein is Tryptophan synthase alpha chain of Wolinella succinogenes (strain ATCC 29543 / DSM 1740 / CCUG 13145 / JCM 31913 / LMG 7466 / NCTC 11488 / FDC 602W) (Vibrio succinogenes).